A 303-amino-acid polypeptide reads, in one-letter code: N-acetyl-D-glucosamine kinase (303 aa).

Residues 4–11 and 133–140 contribute to the ATP site; these read GFDIGGTK and GVGGGLVL. Residues H157, C177, C179, and C184 each contribute to the Zn(2+) site.

The protein belongs to the ROK (NagC/XylR) family. NagK subfamily.

The catalysed reaction is N-acetyl-D-glucosamine + ATP = N-acetyl-D-glucosamine 6-phosphate + ADP + H(+). The protein operates within cell wall biogenesis; peptidoglycan recycling. In terms of biological role, catalyzes the phosphorylation of N-acetyl-D-glucosamine (GlcNAc) derived from cell-wall degradation, yielding GlcNAc-6-P. The chain is N-acetyl-D-glucosamine kinase from Salmonella agona (strain SL483).